Reading from the N-terminus, the 474-residue chain is 6-phospho-beta-galactosidase (474 aa).

D-galactose 6-phosphate-binding residues include Gln-19, His-116, Asn-159, Glu-160, and Asn-297. The Proton donor role is filled by Glu-160. Glu-375 serves as the catalytic Nucleophile. Positions 433, 434, 440, and 442 each coordinate D-galactose 6-phosphate.

The protein belongs to the glycosyl hydrolase 1 family.

The catalysed reaction is a 6-phospho-beta-D-galactoside + H2O = D-galactose 6-phosphate + an alcohol. The protein operates within carbohydrate metabolism; lactose degradation; D-galactose 6-phosphate and beta-D-glucose from lactose 6-phosphate: step 1/1. The chain is 6-phospho-beta-galactosidase from Lacticaseibacillus casei (Lactobacillus casei).